Reading from the N-terminus, the 393-residue chain is Probable WRKY transcription factor 25 (393 aa).

The segment at residues 160–224 (MVSRNSNDGY…YKGGHNHPKP (65 aa)) is a DNA-binding region (WRKY 1). The Zn(2+) site is built by Cys191, Cys196, His219, and His221. 2 disordered regions span residues 217–242 (GGHN…VNGR) and 277–303 (SEYG…DEGM). Residues 229 to 240 (RPSQSSLPSSVN) show a composition bias toward polar residues. The span at 289–298 (PEMKRMKREG) shows a compositional bias: basic and acidic residues. The segment at residues 322–387 (SDIDVLIDGF…YEGRHNHDIP (66 aa)) is a DNA-binding region (WRKY 2). Residues Cys353, Cys358, His382, and His384 each contribute to the Zn(2+) site.

Belongs to the WRKY group I family. Interacts with MKS1. Interacts with SIB1. Interacts with VQ10 and CAMBP25/VQ15. Phosphorylated by MPK4. Highly expressed in roots and at lower levels in leaves, stems and seeds.

Its subcellular location is the nucleus. Transcription factor. Interacts specifically with the W box (5'-(T)TGAC[CT]-3'), a frequently occurring elicitor-responsive cis-acting element. Functions with WRKY33 as positive regulator of salt stress response and abscisic acid (ABA) signaling. Plays a partial role in heat stress tolerance. Functions with WRKY26 and WRKY33 as positive regulator of plant thermotolerance by partially participating in ethylene-response signal transduction pathway. The chain is Probable WRKY transcription factor 25 (WRKY25) from Arabidopsis thaliana (Mouse-ear cress).